We begin with the raw amino-acid sequence, 359 residues long: 3-dehydroquinate synthase (359 aa).

Residues 69-74 (DAETGK), 103-107 (GAATD), 127-128 (TT), Lys140, and Lys149 contribute to the NAD(+) site. 3 residues coordinate Zn(2+): Glu182, His244, and His260.

Belongs to the sugar phosphate cyclases superfamily. Dehydroquinate synthase family. Co(2+) serves as cofactor. Requires Zn(2+) as cofactor. It depends on NAD(+) as a cofactor.

The protein localises to the cytoplasm. The catalysed reaction is 7-phospho-2-dehydro-3-deoxy-D-arabino-heptonate = 3-dehydroquinate + phosphate. It participates in metabolic intermediate biosynthesis; chorismate biosynthesis; chorismate from D-erythrose 4-phosphate and phosphoenolpyruvate: step 2/7. Its function is as follows. Catalyzes the conversion of 3-deoxy-D-arabino-heptulosonate 7-phosphate (DAHP) to dehydroquinate (DHQ). The protein is 3-dehydroquinate synthase of Corynebacterium diphtheriae (strain ATCC 700971 / NCTC 13129 / Biotype gravis).